We begin with the raw amino-acid sequence, 586 residues long: Estrogen receptor (586 aa).

The interval 1-179 is modulating; sequence MTMPLPNKTT…SMESTKETRY (179 aa). The segment at 144–173 is disordered; that stretch reads FYRSSSDNRRQSGRERMSSANDKGPPSMES. Residues 149–160 are compositionally biased toward basic and acidic residues; sequence SDNRRQSGRERM. 2 NR C4-type zinc fingers span residues 180-200 and 216-240; these read CAVCSDYASGYHYGVWSCEGC and CPATNQCTIDKNRRKSCQACRLRKC. Residues 180–245 constitute a DNA-binding region (nuclear receptor); it reads CAVCSDYASG…RLRKCYEVGM (66 aa). The hinge stretch occupies residues 246–302; sequence MKGGIRKDRRGGRLLKHKRQKEEQEQKNDVDPSEIRTASIWVNPSVKSMKLSPVLSL. Residues 252–264 are compositionally biased toward basic residues; the sequence is KDRRGGRLLKHKR. Residues 252–276 are disordered; sequence KDRRGGRLLKHKRQKEEQEQKNDVD. The segment covering 265 to 276 has biased composition (basic and acidic residues); sequence QKEEQEQKNDVD. Residues 303–539 form the NR LBD domain; it reads TAEQLISALM…DLLLEMLDAH (237 aa). Residues 543 to 556 show a composition bias toward basic and acidic residues; it reads TPKDKTTTQEEDSR. Positions 543–569 are disordered; that stretch reads TPKDKTTTQEEDSRSPPTTTVNGASPC.

Belongs to the nuclear hormone receptor family. NR3 subfamily. In terms of assembly, binds DNA as a homodimer. Can form a heterodimer with ER-beta.

It localises to the nucleus. In terms of biological role, the steroid hormones and their receptors are involved in the regulation of eukaryotic gene expression and affect cellular proliferation and differentiation in target tissues. This is Estrogen receptor (esr1) from Xenopus laevis (African clawed frog).